The chain runs to 80 residues: U1-nemetoxin-Csp1a (80 aa).

The first 20 residues, 1–20 (MKYFVVFCVLIIAVAAFTSA), serve as a signal peptide directing secretion. A propeptide spanning residues 21–41 (AEDGEVFEENPLEFPKTIQKR) is cleaved from the precursor. Disulfide bonds link Cys42/Cys56, Cys49/Cys60, Cys55/Cys77, and Cys66/Cys73.

It belongs to the neurotoxin 13 (insecticidal toxin ABC) family. 02 (Calisoga) subfamily. In terms of tissue distribution, expressed by the venom gland.

The protein resides in the secreted. Functionally, causes paralysis to insect larvae (H.virescens). This toxin is active only on insects. The chain is U1-nemetoxin-Csp1a from Calisoga sp. (Spider).